Here is a 276-residue protein sequence, read N- to C-terminus: Large ribosomal subunit protein uL2 (276 aa).

A disordered region spans residues 224–276 (VMNPVDHPHGGGEGKAPIGRKSPMTPWGKPTLGYKTRKKKNKSDKFIIRRRKK). Positions 258 to 276 (KTRKKKNKSDKFIIRRRKK) are enriched in basic residues.

This sequence belongs to the universal ribosomal protein uL2 family. Part of the 50S ribosomal subunit. Forms a bridge to the 30S subunit in the 70S ribosome.

Its function is as follows. One of the primary rRNA binding proteins. Required for association of the 30S and 50S subunits to form the 70S ribosome, for tRNA binding and peptide bond formation. It has been suggested to have peptidyltransferase activity; this is somewhat controversial. Makes several contacts with the 16S rRNA in the 70S ribosome. This Geobacillus kaustophilus (strain HTA426) protein is Large ribosomal subunit protein uL2.